Here is a 36-residue protein sequence, read N- to C-terminus: Termicin (36 aa).

3 cysteine pairs are disulfide-bonded: Cys-2–Cys-24, Cys-7–Cys-29, and Cys-11–Cys-31. A Glycine amide modification is found at Gly-36.

Expressed in salivary glands and hemocytes.

Its subcellular location is the secreted. Weak activity against Gram-positive bacteria B.megaterium, S.pyogenes and M.luteus, strong activity against yeasts C.albicans, C.neoformans and S.cerevisiae and filamentous fungi F.oxysporum, F.culmorum, N.crassa and N.hematococca. Less active against filamentous fungus T.viride. Inactive against Gram-positive bacteria A.viridans and S.aureus, filamentous fungi A.fumigatus and B.bassiana and yeast C.glabrata. The polypeptide is Termicin (Pseudacanthotermes spiniger).